A 179-amino-acid polypeptide reads, in one-letter code: Large ribosomal subunit protein bL9 (179 aa).

The tract at residues 155-179 is disordered; the sequence is KPEEAPVPVAEEPTAETEQAEVAAE. Positions 167-179 are enriched in acidic residues; sequence PTAETEQAEVAAE.

This sequence belongs to the bacterial ribosomal protein bL9 family.

In terms of biological role, binds to the 23S rRNA. The protein is Large ribosomal subunit protein bL9 of Porphyromonas gingivalis (strain ATCC BAA-308 / W83).